A 129-amino-acid chain; its full sequence is Prefoldin subunit 6 (129 aa).

Position 2 is an N-acetylalanine (A2). Residue K21 is modified to N6-acetyllysine. K66 is subject to N6-acetyllysine; alternate. K66 is covalently cross-linked (Glycyl lysine isopeptide (Lys-Gly) (interchain with G-Cter in SUMO1); alternate). A Glycyl lysine isopeptide (Lys-Gly) (interchain with G-Cter in SUMO2); alternate cross-link involves residue K66.

The protein belongs to the prefoldin subunit beta family. Heterohexamer of two PFD-alpha type and four PFD-beta type subunits. Component of the PAQosome complex which is responsible for the biogenesis of several protein complexes and which consists of R2TP complex members RUVBL1, RUVBL2, RPAP3 and PIH1D1, URI complex members PFDN2, PFDN6, PDRG1, UXT and URI1 as well as ASDURF, POLR2E and DNAAF10/WDR92.

Its function is as follows. Binds specifically to cytosolic chaperonin (c-CPN) and transfers target proteins to it. Binds to nascent polypeptide chain and promotes folding in an environment in which there are many competing pathways for nonnative proteins. The chain is Prefoldin subunit 6 (PFDN6) from Bos taurus (Bovine).